We begin with the raw amino-acid sequence, 365 residues long: DNA replication and repair protein RecF (365 aa).

Residue G30–T37 coordinates ATP.

Belongs to the RecF family.

Its subcellular location is the cytoplasm. Its function is as follows. The RecF protein is involved in DNA metabolism; it is required for DNA replication and normal SOS inducibility. RecF binds preferentially to single-stranded, linear DNA. It also seems to bind ATP. The sequence is that of DNA replication and repair protein RecF from Cellvibrio japonicus (strain Ueda107) (Pseudomonas fluorescens subsp. cellulosa).